A 554-amino-acid polypeptide reads, in one-letter code: Glucose-6-phosphate isomerase (554 aa).

E359 acts as the Proton donor in catalysis. Residues H390 and K518 contribute to the active site.

The protein belongs to the GPI family.

The protein resides in the cytoplasm. It carries out the reaction alpha-D-glucose 6-phosphate = beta-D-fructose 6-phosphate. It functions in the pathway carbohydrate biosynthesis; gluconeogenesis. The protein operates within carbohydrate degradation; glycolysis; D-glyceraldehyde 3-phosphate and glycerone phosphate from D-glucose: step 2/4. Functionally, catalyzes the reversible isomerization of glucose-6-phosphate to fructose-6-phosphate. The chain is Glucose-6-phosphate isomerase from Pseudomonas fluorescens (strain ATCC BAA-477 / NRRL B-23932 / Pf-5).